Consider the following 222-residue polypeptide: Protein DEHYDRATION-INDUCED 19 homolog 6 (222 aa).

Phosphoserine is present on Ser-116.

It belongs to the Di19 family. In terms of processing, phosphorylated in vitro by CPK3 or CPK11. As to expression, expressed in seedlings, roots, leaves, stems, flowers and siliques.

It is found in the nucleus. The polypeptide is Protein DEHYDRATION-INDUCED 19 homolog 6 (DI19-6) (Arabidopsis thaliana (Mouse-ear cress)).